The chain runs to 338 residues: Anthranilate phosphoribosyltransferase (338 aa).

Residues G81, 84-85, T89, 91-94, 109-117, and T121 contribute to the 5-phospho-alpha-D-ribose 1-diphosphate site; these read GD, NIST, and KHGNRAQSS. G81 contributes to the anthranilate binding site. Residue S93 participates in Mg(2+) binding. N112 contributes to the anthranilate binding site. Anthranilate is bound at residue R167. Residues D225 and E226 each contribute to the Mg(2+) site.

The protein belongs to the anthranilate phosphoribosyltransferase family. In terms of assembly, homodimer. Mg(2+) is required as a cofactor.

It carries out the reaction N-(5-phospho-beta-D-ribosyl)anthranilate + diphosphate = 5-phospho-alpha-D-ribose 1-diphosphate + anthranilate. Its pathway is amino-acid biosynthesis; L-tryptophan biosynthesis; L-tryptophan from chorismate: step 2/5. Its function is as follows. Catalyzes the transfer of the phosphoribosyl group of 5-phosphorylribose-1-pyrophosphate (PRPP) to anthranilate to yield N-(5'-phosphoribosyl)-anthranilate (PRA). The chain is Anthranilate phosphoribosyltransferase from Rhizobium rhizogenes (strain K84 / ATCC BAA-868) (Agrobacterium radiobacter).